A 505-amino-acid polypeptide reads, in one-letter code: L-carnitine/gamma-butyrobetaine antiporter (505 aa).

The next 12 membrane-spanning stretches (helical) occupy residues I10–V30, I50–V70, I92–I112, G143–V163, F195–V215, L231–L251, S263–M283, W316–A336, L347–G367, L403–I423, L446–L466, and A475–I495.

The protein belongs to the BCCT transporter (TC 2.A.15) family. CaiT subfamily. In terms of assembly, homotrimer.

The protein resides in the cell inner membrane. It carries out the reaction 4-(trimethylamino)butanoate(in) + (R)-carnitine(out) = 4-(trimethylamino)butanoate(out) + (R)-carnitine(in). The protein operates within amine and polyamine metabolism; carnitine metabolism. Functionally, catalyzes the exchange of L-carnitine for gamma-butyrobetaine. The chain is L-carnitine/gamma-butyrobetaine antiporter from Salmonella arizonae (strain ATCC BAA-731 / CDC346-86 / RSK2980).